Consider the following 186-residue polypeptide: Putative manganese efflux pump MntP (186 aa).

A run of 6 helical transmembrane segments spans residues 3 to 23 (PIAL…AAIG), 39 to 59 (IGII…LIGK), 65 to 85 (VEAW…LHMI), 109 to 129 (CLTA…LAFI), 133 to 153 (IWIA…IGIM), and 166 to 186 (AEIF…YGQL).

The protein belongs to the MntP (TC 9.B.29) family.

Its subcellular location is the cell inner membrane. Its function is as follows. Probably functions as a manganese efflux pump. The polypeptide is Putative manganese efflux pump MntP (Alcanivorax borkumensis (strain ATCC 700651 / DSM 11573 / NCIMB 13689 / SK2)).